Here is a 339-residue protein sequence, read N- to C-terminus: Cathepsin B (339 aa).

Residues 1-17 (MWWLWASLCCLLALGDA) form the signal peptide. Positions 18–79 (RSRPSFHPLS…QRVMFTEDLK (62 aa)) are cleaved as a propeptide — activation peptide. Intrachain disulfides connect C93/C122, C105/C150, C141/C207, C142/C146, C179/C211, and C187/C198. C108 is an active-site residue. Residue N192 is glycosylated (N-linked (GlcNAc...) asparagine). Position 220 is an N6-acetyllysine (K220). Active-site residues include H278 and N298. Residues 334 to 339 (QYWEKI) constitute a propeptide that is removed on maturation.

It belongs to the peptidase C1 family. Dimer of a heavy chain and a light chain cross-linked by a disulfide bond. Interacts with SRPX2. Directly interacts with SHKBP1.

The protein localises to the lysosome. It localises to the melanosome. It is found in the secreted. Its subcellular location is the extracellular space. The protein resides in the apical cell membrane. It catalyses the reaction Hydrolysis of proteins with broad specificity for peptide bonds. Preferentially cleaves -Arg-Arg-|-Xaa bonds in small molecule substrates (thus differing from cathepsin L). In addition to being an endopeptidase, shows peptidyl-dipeptidase activity, liberating C-terminal dipeptides.. Its function is as follows. Thiol protease which is believed to participate in intracellular degradation and turnover of proteins. Cleaves matrix extracellular phosphoglycoprotein MEPE. Involved in the solubilization of cross-linked TG/thyroglobulin in the thyroid follicle lumen. Has also been implicated in tumor invasion and metastasis. This chain is Cathepsin B (CTSB), found in Macaca fascicularis (Crab-eating macaque).